The following is a 698-amino-acid chain: Effector protein AvrPphDPgy (698 aa).

The segment covering 1-15 (MNPLRSIQHNITTPP) has biased composition (polar residues). 2 disordered regions span residues 1-36 (MNPL…HPKR) and 171-200 (VDSS…DSDS). Over residues 172-181 (DSSSPLLSSP) the composition is skewed to low complexity.

It is found in the secreted. Functionally, effector protein involved in non-host recognition. This chain is Effector protein AvrPphDPgy (avrPphDPgy), found in Pseudomonas savastanoi pv. glycinea (Pseudomonas syringae pv. glycinea).